A 142-amino-acid polypeptide reads, in one-letter code: Transcription antitermination protein NusB (142 aa).

It belongs to the NusB family.

In terms of biological role, involved in transcription antitermination. Required for transcription of ribosomal RNA (rRNA) genes. Binds specifically to the boxA antiterminator sequence of the ribosomal RNA (rrn) operons. This is Transcription antitermination protein NusB from Latilactobacillus sakei subsp. sakei (strain 23K) (Lactobacillus sakei subsp. sakei).